We begin with the raw amino-acid sequence, 298 residues long: 4-hydroxybenzoate octaprenyltransferase (298 aa).

7 helical membrane-spanning segments follow: residues 30–50 (IGTWLLMWPTLWALWLAAEGI), 54–74 (GTLLIFVIGVYVMRAAGCVVN), 105–125 (VLFAGLVIIAFGLVCLTNLPT), 148–168 (FPQVVLGAAFSWGIPMAFMAI), 218–238 (DRLMIGLLQALTLLLLAWVGL), 240–260 (LALGGFFWLGLAAMGAIFVFQ), and 275–295 (AFLNNHWAGLVVFAGIALSLW).

Belongs to the UbiA prenyltransferase family. Requires Mg(2+) as cofactor.

It is found in the cell inner membrane. The enzyme catalyses all-trans-octaprenyl diphosphate + 4-hydroxybenzoate = 4-hydroxy-3-(all-trans-octaprenyl)benzoate + diphosphate. It functions in the pathway cofactor biosynthesis; ubiquinone biosynthesis. Functionally, catalyzes the prenylation of para-hydroxybenzoate (PHB) with an all-trans polyprenyl group. Mediates the second step in the final reaction sequence of ubiquinone-8 (UQ-8) biosynthesis, which is the condensation of the polyisoprenoid side chain with PHB, generating the first membrane-bound Q intermediate 3-octaprenyl-4-hydroxybenzoate. This chain is 4-hydroxybenzoate octaprenyltransferase, found in Chromohalobacter salexigens (strain ATCC BAA-138 / DSM 3043 / CIP 106854 / NCIMB 13768 / 1H11).